A 167-amino-acid polypeptide reads, in one-letter code: Epithelial membrane protein 2 (167 aa).

A helical transmembrane segment spans residues 1-21 (MLVLLAFIIAFHITSAALLFI). N-linked (GlcNAc...) asparagine glycosylation is found at asparagine 44, asparagine 47, and asparagine 52. A run of 3 helical transmembrane segments spans residues 67–87 (TMIL…LQLF), 95–115 (FVLT…AASI), and 143–163 (YILA…YLIL).

The protein belongs to the PMP-22/EMP/MP20 family. In terms of assembly, interacts with PTK2; regulates PTK2 activation and localization. Interacts with ITGB3; regulates the levels of the heterodimer ITGA5-ITGB3 integrin surface expression. Interacts with P2RX7 (via C-terminus). Interacts with ITGB1; the interaction may be direct or indirect and ITGB1 has a heterodimer form.

The protein resides in the golgi apparatus membrane. It is found in the cell membrane. It localises to the apical cell membrane. Its subcellular location is the membrane raft. The protein localises to the cytoplasm. The protein resides in the nucleus. It is found in the perinuclear region. Functions as a key regulator of cell membrane composition by regulating protein surface expression. Also, plays a role in regulation of processes including cell migration, cell proliferation, cell contraction and cell adhesion. Regulates transepithelial migration of neutrophils into the alveolar lumen, potentially via mediation of cell surface expression of adhesion markers and lipid raft formation. Negatively regulates caveolae formation by reducing CAV1 expression and CAV1 amount by increasing lysosomal degradation. Facilitates surface trafficking and the formation of lipid rafts bearing GPI-anchor proteins. Regulates surface expression of MHC1 and ICAM1 proteins increasing susceptibility to T-cell mediated cytotoxicity. Regulates the plasma membrane expression of the integrin heterodimers ITGA6-ITGB1, ITGA5-ITGB3 and ITGA5-ITGB1 resulting in modulation of cell-matrix adhesion. Also regulates many processes through PTK2. Regulates blood vessel endothelial cell migration and angiogenesis by regulating VEGF protein expression through PTK2 activation. Regulates cell migration and cell contraction through PTK2 and SRC activation. Regulates focal adhesion density, F-actin conformation and cell adhesion capacity through interaction with PTK2. Positively regulates cell proliferation. Plays a role during cell death and cell blebbing. Promotes angiogenesis and vasculogenesis through induction of VEGFA via a HIF1A-dependent pathway. Also plays a role in embryo implantation by regulating surface trafficking of integrin heterodimer ITGA5-ITGB3. Plays a role in placental angiogenesis and uterine natural killer cell regulation at the maternal-fetal placental interface, however not required in the maternal tissues for a viable pregnancy. Involved in the early stages of embryogenic development and cardiogenesis, potentially via regulation of epithelial-mesenchymal transition timing. May play a role in glomerular filtration. This chain is Epithelial membrane protein 2 (EMP2), found in Pan troglodytes (Chimpanzee).